Here is a 366-residue protein sequence, read N- to C-terminus: GTP cyclohydrolase 1 type 2 homolog (366 aa).

Zn(2+) contacts are provided by His-64, His-65, Asp-102, His-326, and Glu-329.

Belongs to the GTP cyclohydrolase I type 2/NIF3 family. In terms of assembly, toroid-shaped homohexamer that has a central cavity of about 38 Angstroms diameter.

The polypeptide is GTP cyclohydrolase 1 type 2 homolog (Staphylococcus aureus (strain Mu50 / ATCC 700699)).